We begin with the raw amino-acid sequence, 175 residues long: ATP-dependent protease subunit HslV (175 aa).

Thr2 is a catalytic residue. Gly158, Cys161, and Thr164 together coordinate Na(+).

The protein belongs to the peptidase T1B family. HslV subfamily. As to quaternary structure, a double ring-shaped homohexamer of HslV is capped on each side by a ring-shaped HslU homohexamer. The assembly of the HslU/HslV complex is dependent on binding of ATP.

It is found in the cytoplasm. It carries out the reaction ATP-dependent cleavage of peptide bonds with broad specificity.. With respect to regulation, allosterically activated by HslU binding. Its function is as follows. Protease subunit of a proteasome-like degradation complex believed to be a general protein degrading machinery. The sequence is that of ATP-dependent protease subunit HslV from Haemophilus influenzae (strain 86-028NP).